Consider the following 35-residue polypeptide: MKKTFLPIFLVILLASYALGNPQITFSKDWRPGKK.

The N-terminal stretch at 1–22 (MKKTFLPIFLVILLASYALGNP) is a signal peptide. Residue Q23 is modified to Pyrrolidone carboxylic acid. P32 is subject to Proline amide.

The protein belongs to the limacoditoxin-1 (ACP-like) family. As to expression, expressed by the venom secretory cell of the spine. The spine is a cuticular structure containing a single large nucleated venom-secreting cell at its base. It is an independent unit capable of producing, storing and injecting venom. On the back of D.vulnerans caterpillars, spines are grouped together by 50 to 100 to form scoli, of which there are eight in D.vulnerans.

The protein localises to the secreted. Its function is as follows. Potently activates insect GPCR. More precisely, it activates the ACP receptor (ACPR) from the mosquito A.aegypti (EC(50)=3.07 nM) with a potency comparable to that of the endogenous ligand. Has no activity on receptors of the closely related neuropeptides adipokinetic hormone and corazonin. In vivo, does not reveal any observable effects when injected into crickets (A.domesticus). Does not induce increase in intracellular calcium in mouse DRG neurons, suggesting that it does not induce pain. In Doratifera vulnerans (Mottled cup moth), this protein is Z-limacoditoxin(1)-Dv4.